The primary structure comprises 294 residues: P32 adhesin (294 aa).

Transmembrane regions (helical) follow at residues 11-31 and 66-86; these read LVGVSFVFSGVIALGTGVGLT and VVGAGAGLIVVSLLLGLGIGI. A run of 2 repeats spans residues 172–193 and 194–214. The 2 X 22 AA repeats stretch occupies residues 172–214; the sequence is GGPMQPNQMGMRPGFNQMPPQMGGMPPNQMGMRPGFNQMPPQM. Residues 234–294 are disordered; that stretch reads RPGFRPQPGG…AGFPPQNGPR (61 aa). Residues 241 to 256 are compositionally biased toward gly residues; sequence PGGGVPMGNKAGGGFN.

The protein resides in the cell projection. It is found in the attachment organelle membrane. Its function is as follows. Adhesin necessary for successful cytadherence and virulence. In Mycoplasmoides gallisepticum (strain R(low / passage 15 / clone 2)) (Mycoplasma gallisepticum), this protein is P32 adhesin (mgc2).